We begin with the raw amino-acid sequence, 228 residues long: Lipoprotein-releasing system ATP-binding protein LolD (228 aa).

One can recognise an ABC transporter domain in the interval 8–228 (LQAKKLVKAY…ELHDGLLRRL (221 aa)). 44-51 (GASGSGKS) provides a ligand contact to ATP.

Belongs to the ABC transporter superfamily. Lipoprotein translocase (TC 3.A.1.125) family. In terms of assembly, the complex is composed of two ATP-binding proteins (LolD) and two transmembrane proteins (LolC and LolE).

The protein resides in the cell inner membrane. Part of the ABC transporter complex LolCDE involved in the translocation of mature outer membrane-directed lipoproteins, from the inner membrane to the periplasmic chaperone, LolA. Responsible for the formation of the LolA-lipoprotein complex in an ATP-dependent manner. The sequence is that of Lipoprotein-releasing system ATP-binding protein LolD from Alcanivorax borkumensis (strain ATCC 700651 / DSM 11573 / NCIMB 13689 / SK2).